Consider the following 147-residue polypeptide: Ribosome maturation factor RimP (147 aa).

Belongs to the RimP family.

Its subcellular location is the cytoplasm. Its function is as follows. Required for maturation of 30S ribosomal subunits. This Legionella pneumophila (strain Lens) protein is Ribosome maturation factor RimP.